The sequence spans 107 residues: MTLNITSKQMDITPAIREHLEERLAKLGKWQTQLISPHFVLNKVPNGFSVEASIGTPLGNLLASATSDDMYKAINEVEEKLERQLNKLQHKSESRRADERLKDSFEN.

The segment at 85-107 is disordered; that stretch reads LNKLQHKSESRRADERLKDSFEN.

Associates mainly with 70S ribosomes.

Its function is as follows. During stationary phase, prevents 70S dimer formation, probably in order to regulate translation efficiency during transition between the exponential and the stationary phases. In addition, during environmental stress such as cold shock or excessive cell density at stationary phase, stabilizes the 70S ribosome against dissociation, inhibits translation initiation and increase translation accuracy. When normal growth conditions are restored, is quickly released from the ribosome. The sequence is that of Ribosome-associated factor Y from Haemophilus influenzae (strain ATCC 51907 / DSM 11121 / KW20 / Rd).